The following is a 1064-amino-acid chain: Phosphatidylinositol 4,5-bisphosphate 3-kinase catalytic subunit beta isoform (1064 aa).

The region spanning 20–109 (SDGAISVDFL…LPVLKLVTRS (90 aa)) is the PI3K-ABD domain. Residues 188–279 (GGKLVVAVHF…RTLPHFILVE (92 aa)) enclose the PI3K-RBD domain. Ser318 carries the phosphoserine modification. The region spanning 323 to 490 (NNNPFQITLV…NATALHITFP (168 aa)) is the C2 PI3K-type domain. The Nuclear localization signal (NLS) motif lies at 404 to 412 (KVKTKKSTK). The PIK helical domain maps to 518-695 (ANVSSRGGKK…GVILEAYCRG (178 aa)). Residues 766-1047 (YVEKCKYMDS…KFDEALRESW (282 aa)) form the PI3K/PI4K catalytic domain. The segment at 772-778 (YMDSKMK) is G-loop. The catalytic loop stretch occupies residues 910–918 (GIGDRHSDN). The tract at residues 929 to 955 (HIDFGHILGNFKSKFGIKRERVPFILT) is activation loop. Residue Ser1064 is modified to Phosphoserine; by autocatalysis.

The protein belongs to the PI3/PI4-kinase family. Heterodimer of a catalytic subunit PIK3CB and a p85 regulatory subunit (PIK3R1, PIK3R2 or PIK3R3). Interaction with PIK3R2 is required for nuclear localization and nuclear export. Part of a complex with PIK3R1 and PTEN. Binding to PTEN may antagonize the lipid kinase activity under normal growth conditions. Part of a complex involved in autophagosome formation composed of PIK3C3 and PIK3R4. Interacts with BECN1, ATG14 and RAB5A. Phosphorylation at Ser-1064 down-regulates lipid kinase activity. Post-translationally, autophosphorylation at Ser-1064 negatively regulates the phosphatidylinositol-4,5-bisphosphate 3-kinase activity.

The protein resides in the cytoplasm. Its subcellular location is the nucleus. It carries out the reaction a 1,2-diacyl-sn-glycero-3-phospho-(1D-myo-inositol-4,5-bisphosphate) + ATP = a 1,2-diacyl-sn-glycero-3-phospho-(1D-myo-inositol-3,4,5-trisphosphate) + ADP + H(+). The catalysed reaction is 1-octadecanoyl-2-(5Z,8Z,11Z,14Z)-eicosatetraenoyl-sn-glycero-3-phospho-1D-myo-inositol 4,5-bisphosphate + ATP = 1-octadecanoyl-2-(5Z,8Z,11Z,14Z-eicosatetraenoyl)-sn-glycero-3-phospho-(1D-myo-inositol 3,4,5-triphosphate) + ADP + H(+). It catalyses the reaction L-seryl-[protein] + ATP = O-phospho-L-seryl-[protein] + ADP + H(+). The protein operates within phospholipid metabolism; phosphatidylinositol phosphate biosynthesis. Its function is as follows. Phosphoinositide-3-kinase (PI3K) phosphorylates phosphatidylinositol (PI) derivatives at position 3 of the inositol ring to produce 3-phosphoinositides. Uses ATP and PtdIns(4,5)P2 (phosphatidylinositol 4,5-bisphosphate) to generate phosphatidylinositol 3,4,5-trisphosphate (PIP3). PIP3 plays a key role by recruiting PH domain-containing proteins to the membrane, including AKT1 and PDPK1, activating signaling cascades involved in cell growth, survival, proliferation, motility and morphology. Involved in the activation of AKT1 upon stimulation by G-protein coupled receptors (GPCRs) ligands such as CXCL12, sphingosine 1-phosphate, and lysophosphatidic acid. May also act downstream receptor tyrosine kinases. Required in different signaling pathways for stable platelet adhesion and aggregation. Plays a role in platelet activation signaling triggered by GPCRs, alpha-IIb/beta-3 integrins (ITGA2B/ ITGB3) and ITAM (immunoreceptor tyrosine-based activation motif)-bearing receptors such as GP6. Regulates the strength of adhesion of ITGA2B/ ITGB3 activated receptors necessary for the cellular transmission of contractile forces. Required for platelet aggregation induced by F2 (thrombin) and thromboxane A2 (TXA2). Has a role in cell survival. May have a role in cell migration. Involved in the early stage of autophagosome formation. Modulates the intracellular level of PtdIns3P (phosphatidylinositol 3-phosphate) and activates PIK3C3 kinase activity. May act as a scaffold, independently of its lipid kinase activity to positively regulate autophagy. May have a role in insulin signaling as scaffolding protein in which the lipid kinase activity is not required. May have a kinase-independent function in regulating cell proliferation and in clathrin-mediated endocytosis. Mediator of oncogenic signal in cell lines lacking PTEN. The lipid kinase activity is necessary for its role in oncogenic transformation. Required for the growth of ERBB2 and RAS driven tumors. Also has a protein kinase activity showing autophosphorylation. The protein is Phosphatidylinositol 4,5-bisphosphate 3-kinase catalytic subunit beta isoform (Pik3cb) of Mus musculus (Mouse).